We begin with the raw amino-acid sequence, 100 residues long: Urease subunit gamma (100 aa).

The protein belongs to the urease gamma subunit family. As to quaternary structure, heterotrimer of UreA (gamma), UreB (beta) and UreC (alpha) subunits. Three heterotrimers associate to form the active enzyme.

The protein resides in the cytoplasm. It catalyses the reaction urea + 2 H2O + H(+) = hydrogencarbonate + 2 NH4(+). It participates in nitrogen metabolism; urea degradation; CO(2) and NH(3) from urea (urease route): step 1/1. This is Urease subunit gamma from Tolumonas auensis (strain DSM 9187 / NBRC 110442 / TA 4).